Reading from the N-terminus, the 392-residue chain is uncharacterized protein (392 aa).

This sequence belongs to the glycosyltransferase 2 family.

This is an uncharacterized protein from Bacillus subtilis (strain 168).